The sequence spans 230 residues: Cytidylate kinase (230 aa).

17–25 is an ATP binding site; that stretch reads GPTASGKGT.

This sequence belongs to the cytidylate kinase family. Type 1 subfamily.

It localises to the cytoplasm. It catalyses the reaction CMP + ATP = CDP + ADP. It carries out the reaction dCMP + ATP = dCDP + ADP. This chain is Cytidylate kinase, found in Ralstonia nicotianae (strain ATCC BAA-1114 / GMI1000) (Ralstonia solanacearum).